The following is a 146-amino-acid chain: Anti-sigma F factor (146 aa).

The protein belongs to the anti-sigma-factor family.

It catalyses the reaction L-seryl-[protein] + ATP = O-phospho-L-seryl-[protein] + ADP + H(+). The catalysed reaction is L-threonyl-[protein] + ATP = O-phospho-L-threonyl-[protein] + ADP + H(+). Its function is as follows. Binds to sigma F and blocks its ability to form an RNA polymerase holoenzyme (E-sigma F). Phosphorylates SpoIIAA on a serine residue. This phosphorylation may enable SpoIIAA to act as an anti-anti-sigma factor that counteracts SpoIIAB and thus releases sigma F from inhibition. The polypeptide is Anti-sigma F factor (Oceanobacillus iheyensis (strain DSM 14371 / CIP 107618 / JCM 11309 / KCTC 3954 / HTE831)).